We begin with the raw amino-acid sequence, 351 residues long: Ferrochelatase (351 aa).

2 residues coordinate Fe cation: histidine 220 and glutamate 301.

This sequence belongs to the ferrochelatase family.

Its subcellular location is the cytoplasm. The catalysed reaction is heme b + 2 H(+) = protoporphyrin IX + Fe(2+). Its pathway is porphyrin-containing compound metabolism; protoheme biosynthesis; protoheme from protoporphyrin-IX: step 1/1. Catalyzes the ferrous insertion into protoporphyrin IX. In Rhodobacter capsulatus (Rhodopseudomonas capsulata), this protein is Ferrochelatase.